The primary structure comprises 22 residues: Heat shock 70-related protein 1, mitochondrial (22 aa).

It belongs to the heat shock protein 70 family.

The protein localises to the mitochondrion. This is Heat shock 70-related protein 1, mitochondrial from Leishmania tarentolae (Sauroleishmania tarentolae).